Consider the following 386-residue polypeptide: Bifunctional enzyme IspD/IspF (386 aa).

The 2-C-methyl-D-erythritol 4-phosphate cytidylyltransferase stretch occupies residues 1-230; that stretch reads MNSVPSLPGQ…LEEQSMSVIP (230 aa). The tract at residues 231–386 is 2-C-methyl-D-erythritol 2,4-cyclodiphosphate synthase; that stretch reads RTGMGFDVHR…AQAVATVVSG (156 aa). A divalent metal cation contacts are provided by Asp237 and His239. 4-CDP-2-C-methyl-D-erythritol 2-phosphate-binding positions include 237–239 and 263–264; these read DVH and HS. Residue His271 coordinates a divalent metal cation. 4-CDP-2-C-methyl-D-erythritol 2-phosphate contacts are provided by residues 285-287, 361-364, and Arg371; these read DIG and TTTE.

This sequence in the N-terminal section; belongs to the IspD/TarI cytidylyltransferase family. IspD subfamily. It in the C-terminal section; belongs to the IspF family. A divalent metal cation is required as a cofactor.

It carries out the reaction 2-C-methyl-D-erythritol 4-phosphate + CTP + H(+) = 4-CDP-2-C-methyl-D-erythritol + diphosphate. The enzyme catalyses 4-CDP-2-C-methyl-D-erythritol 2-phosphate = 2-C-methyl-D-erythritol 2,4-cyclic diphosphate + CMP. It participates in isoprenoid biosynthesis; isopentenyl diphosphate biosynthesis via DXP pathway; isopentenyl diphosphate from 1-deoxy-D-xylulose 5-phosphate: step 2/6. The protein operates within isoprenoid biosynthesis; isopentenyl diphosphate biosynthesis via DXP pathway; isopentenyl diphosphate from 1-deoxy-D-xylulose 5-phosphate: step 4/6. Its function is as follows. Bifunctional enzyme that catalyzes the formation of 4-diphosphocytidyl-2-C-methyl-D-erythritol from CTP and 2-C-methyl-D-erythritol 4-phosphate (MEP) (IspD), and catalyzes the conversion of 4-diphosphocytidyl-2-C-methyl-D-erythritol 2-phosphate (CDP-ME2P) to 2-C-methyl-D-erythritol 2,4-cyclodiphosphate (ME-CPP) with a corresponding release of cytidine 5-monophosphate (CMP) (IspF). In Novosphingobium aromaticivorans (strain ATCC 700278 / DSM 12444 / CCUG 56034 / CIP 105152 / NBRC 16084 / F199), this protein is Bifunctional enzyme IspD/IspF.